Here is a 159-residue protein sequence, read N- to C-terminus: MDMEKLKRMQARGGVRTGDGKGTPRRKVKNVHKSTGMDDKKLQTSLKKLNVQPIQAIEEVNMFKSDGNVIHFAAPKVHAAVPSNTFAIYGNGEDKELTELVPGILNQLGPDSLASLRKLAESYQSMQKAEGGEDKKDDDEDDDDIPDLVEGENFEDKVE.

2 disordered regions span residues 1–39 (MDME…GMDD) and 121–159 (ESYQ…DKVE). The span at 23-32 (TPRRKVKNVH) shows a compositional bias: basic residues. An NAC-A/B domain is found at 36–101 (GMDDKKLQTS…GEDKELTELV (66 aa)). Residues 136-153 (KDDDEDDDDIPDLVEGEN) show a composition bias toward acidic residues.

This sequence belongs to the NAC-beta family. In terms of assembly, part of the nascent polypeptide-associated complex (NAC), consisting of EGD2 and EGD1. NAC associates with ribosomes via EGD1.

The protein resides in the cytoplasm. It localises to the nucleus. Its function is as follows. Component of the nascent polypeptide-associated complex (NAC), a dynamic component of the ribosomal exit tunnel, protecting the emerging polypeptides from interaction with other cytoplasmic proteins to ensure appropriate nascent protein targeting. The NAC complex also promotes mitochondrial protein import by enhancing productive ribosome interactions with the outer mitochondrial membrane and blocks the inappropriate interaction of ribosomes translating non-secretory nascent polypeptides with translocation sites in the membrane of the endoplasmic reticulum. EGD1 may act as a transcription factor that exert a negative effect on the expression of several genes that are transcribed by RNA polymerase II. The protein is Nascent polypeptide-associated complex subunit beta (egd1) of Botryotinia fuckeliana (strain B05.10) (Noble rot fungus).